The primary structure comprises 175 residues: CDP-archaeol synthase (175 aa).

The next 4 membrane-spanning stretches (helical) occupy residues 41-61, 82-102, 122-142, and 147-167; these read GFFV…QLLE, TILI…MSFF, FVLG…AEQF, and IAVI…VGYF.

It belongs to the CDP-archaeol synthase family. It depends on Mg(2+) as a cofactor.

Its subcellular location is the cell membrane. The catalysed reaction is 2,3-bis-O-(geranylgeranyl)-sn-glycerol 1-phosphate + CTP + H(+) = CDP-2,3-bis-O-(geranylgeranyl)-sn-glycerol + diphosphate. It functions in the pathway membrane lipid metabolism; glycerophospholipid metabolism. Its function is as follows. Catalyzes the formation of CDP-2,3-bis-(O-geranylgeranyl)-sn-glycerol (CDP-archaeol) from 2,3-bis-(O-geranylgeranyl)-sn-glycerol 1-phosphate (DGGGP) and CTP. This reaction is the third ether-bond-formation step in the biosynthesis of archaeal membrane lipids. In Methanococcoides burtonii (strain DSM 6242 / NBRC 107633 / OCM 468 / ACE-M), this protein is CDP-archaeol synthase.